A 487-amino-acid chain; its full sequence is ATP synthase subunit beta (487 aa).

164–171 (GGAGVGKT) is an ATP binding site.

Belongs to the ATPase alpha/beta chains family. F-type ATPases have 2 components, CF(1) - the catalytic core - and CF(0) - the membrane proton channel. CF(1) has five subunits: alpha(3), beta(3), gamma(1), delta(1), epsilon(1). CF(0) has four main subunits: a(1), b(1), b'(1) and c(9-12).

The protein resides in the cellular thylakoid membrane. The enzyme catalyses ATP + H2O + 4 H(+)(in) = ADP + phosphate + 5 H(+)(out). In terms of biological role, produces ATP from ADP in the presence of a proton gradient across the membrane. The catalytic sites are hosted primarily by the beta subunits. This Synechococcus sp. (strain CC9311) protein is ATP synthase subunit beta.